The sequence spans 161 residues: Nucleotide-binding protein Bcenmc03_2579 (161 aa).

This sequence belongs to the YajQ family.

Its function is as follows. Nucleotide-binding protein. The sequence is that of Nucleotide-binding protein Bcenmc03_2579 from Burkholderia orbicola (strain MC0-3).